The primary structure comprises 421 residues: 4'-demethylrebeccamycin synthase (421 aa).

It belongs to the glycosyltransferase 28 family.

The enzyme catalyses 4'-demethylrebeccamycin + H2O = dichloroarcyriaflavin A + beta-D-glucose. Its pathway is alkaloid biosynthesis. Functionally, catalyzes the penultimate step in the biosynthesis of rebeccamycin, an indolocarbazole alkaloid that inhibits topoisomerase 1. Has a wide substrate range, including staurosporine aglycone, EJG-III-108A, J-104303, 6-N-methyl-arcyriaflavin and indolo-[2,3-a]-carbazole. This Lentzea aerocolonigenes (Lechevalieria aerocolonigenes) protein is 4'-demethylrebeccamycin synthase (rebG).